Consider the following 345-residue polypeptide: S-adenosylmethionine:tRNA ribosyltransferase-isomerase (345 aa).

Belongs to the QueA family. Monomer.

Its subcellular location is the cytoplasm. The enzyme catalyses 7-aminomethyl-7-carbaguanosine(34) in tRNA + S-adenosyl-L-methionine = epoxyqueuosine(34) in tRNA + adenine + L-methionine + 2 H(+). It participates in tRNA modification; tRNA-queuosine biosynthesis. Its function is as follows. Transfers and isomerizes the ribose moiety from AdoMet to the 7-aminomethyl group of 7-deazaguanine (preQ1-tRNA) to give epoxyqueuosine (oQ-tRNA). The chain is S-adenosylmethionine:tRNA ribosyltransferase-isomerase from Acinetobacter baumannii (strain AB0057).